The sequence spans 511 residues: Probable G-protein coupled receptor 152 (511 aa).

The interval 1–20 (MDTAVEANLGAAGHGPRTEL) is disordered. The Extracellular portion of the chain corresponds to 1–33 (MDTAVEANLGAAGHGPRTELSDEDYYPQGSWDT). The chain crosses the membrane as a helical span at residues 34 to 54 (VFLVALLLLGLPANGLMAWLA). Topologically, residues 55 to 65 (GSQARHGAGTR) are cytoplasmic. A helical transmembrane segment spans residues 66 to 86 (LALLLLSLALSDFLFLAAATF). Residues 87 to 105 (QILEIQHGGHWPLGTAACR) lie on the Extracellular side of the membrane. The cysteines at positions 104 and 182 are disulfide-linked. Residues 106–126 (FYYFLWGVSYSSGLFLLTALS) traverse the membrane as a helical segment. Topologically, residues 127–148 (LDRCLLALCPRWYPGHRPARLP) are cytoplasmic. The chain crosses the membrane as a helical span at residues 149–169 (LWVCAGVWVLATLFSVPWLVF). Over 170–194 (PEAAVWWYDLVICLDFWDTEELPLR) the chain is Extracellular. A helical membrane pass occupies residues 195-215 (MLEILGGFLPFLLLLVCHVLT). Residues 216 to 258 (QATACRTCCGHQPRRMACHGFARVAKTILSAYVVLRLPYQLAQ) lie on the Cytoplasmic side of the membrane. The helical transmembrane segment at 259–279 (LLYLAFLWDVYPGYLLWEALV) threads the bilayer. Residues 280-282 (YSD) are Extracellular-facing. Residues 283–303 (YLILLNSCLSPFLCLAASADL) form a helical membrane-spanning segment. The Cytoplasmic segment spans residues 304-511 (RALLRTVLSS…PEEAPSAGPT (208 aa)). Disordered regions lie at residues 328–349 (PAEPQTLPGPTSEGQSRLDSVV), 361–386 (SDSVVQPEVSPSAQPQSDSVAQPTVG), and 407–511 (PQLD…AGPT). Polar residues-rich tracts occupy residues 335-345 (PGPTSEGQSRL) and 369-386 (VSPSAQPQSDSVAQPTVG). Low complexity predominate over residues 419-433 (PSAQPQSKSVVQPQV). Polar residues-rich tracts occupy residues 435–453 (PLTQPQLDPVAQPQSNTET) and 462–473 (SASNPGEENSSG).

This sequence belongs to the G-protein coupled receptor 1 family.

Its subcellular location is the cell membrane. In terms of biological role, orphan receptor. This Mus musculus (Mouse) protein is Probable G-protein coupled receptor 152 (Gpr152).